The following is a 170-amino-acid chain: CFA/I fimbrial subunit B (170 aa).

Positions 1-23 are cleaved as a signal peptide; it reads MKFKKTIGAMALTTMFVAVSASA.

The protein belongs to the fimbrial CS1 protein family. CFA/I fimbriae are rather rigid, thread-like filaments of 0.5-1 micrometer, with an apparent axial hole, and a diameter of 7 nanometers. A single CFA/I fimbria consists of about 100 identical protein subunits.

It localises to the fimbrium. Its function is as follows. Fimbriae (also called pili), polar filaments radiating from the surface of the bacterium to a length of 0.5-1.5 micrometers and numbering 100-300 per cell, enable bacteria to colonize the epithelium of specific host organs. The protein is CFA/I fimbrial subunit B (cfaB) of Escherichia coli O78:H11 (strain H10407 / ETEC).